Here is a 140-residue protein sequence, read N- to C-terminus: Immunity protein RhsIC (140 aa).

Its function is as follows. Putative immunity protein component of a toxin-immunity protein module, which may function as a cellular contact-dependent growth inhibition (CDI) system. Blocks the toxic effects of expression of the C-terminus (residues 1519-1658) of cognate toxin RhsC in E.coli. The polypeptide is Immunity protein RhsIC (rhsIC) (Dickeya dadantii (strain 3937) (Erwinia chrysanthemi (strain 3937))).